We begin with the raw amino-acid sequence, 529 residues long: Probable cytochrome P450 6t1 (529 aa).

Cysteine 472 is a binding site for heme.

The protein belongs to the cytochrome P450 family. The cofactor is heme.

It is found in the endoplasmic reticulum membrane. Its subcellular location is the microsome membrane. In terms of biological role, may be involved in the metabolism of insect hormones and in the breakdown of synthetic insecticides. The chain is Probable cytochrome P450 6t1 (Cyp6t1) from Drosophila melanogaster (Fruit fly).